Here is a 111-residue protein sequence, read N- to C-terminus: WAP four-disulfide core domain protein 12 (111 aa).

An N-terminal signal peptide occupies residues 1–23; that stretch reads MRSSRFLVLMVSLALVTLVASEG. The WAP domain maps to 27–74; the sequence is NTEKPGVCPADNVRCIKSDPPQCHTDQDCQGIRKCCYLHCGFKCVIPV. Disulfide bonds link cysteine 34–cysteine 62, cysteine 41–cysteine 66, cysteine 49–cysteine 61, and cysteine 55–cysteine 70.

The protein resides in the secreted. In terms of biological role, antibacterial protein. Putative acid-stable proteinase inhibitor. The polypeptide is WAP four-disulfide core domain protein 12 (WFDC12) (Saimiri boliviensis boliviensis (Bolivian squirrel monkey)).